Here is a 287-residue protein sequence, read N- to C-terminus: ATP synthase gamma chain (287 aa).

It belongs to the ATPase gamma chain family. In terms of assembly, F-type ATPases have 2 components, CF(1) - the catalytic core - and CF(0) - the membrane proton channel. CF(1) has five subunits: alpha(3), beta(3), gamma(1), delta(1), epsilon(1). CF(0) has three main subunits: a, b and c.

The protein localises to the cell inner membrane. Produces ATP from ADP in the presence of a proton gradient across the membrane. The gamma chain is believed to be important in regulating ATPase activity and the flow of protons through the CF(0) complex. The chain is ATP synthase gamma chain from Colwellia maris.